The following is a 478-amino-acid chain: Ribosomal RNA small subunit methyltransferase F (478 aa).

S-adenosyl-L-methionine is bound by residues Ala-121–Lys-127, Glu-145, Asp-172, and Asp-190. The active-site Nucleophile is Cys-243.

It belongs to the class I-like SAM-binding methyltransferase superfamily. RsmB/NOP family.

It is found in the cytoplasm. The enzyme catalyses cytidine(1407) in 16S rRNA + S-adenosyl-L-methionine = 5-methylcytidine(1407) in 16S rRNA + S-adenosyl-L-homocysteine + H(+). Its function is as follows. Specifically methylates the cytosine at position 1407 (m5C1407) of 16S rRNA. This Shewanella sediminis (strain HAW-EB3) protein is Ribosomal RNA small subunit methyltransferase F.